The following is a 432-amino-acid chain: Adenylosuccinate synthetase (432 aa).

GTP contacts are provided by residues glycine 16–lysine 22 and glycine 44–methionine 46. Aspartate 17 (proton acceptor) is an active-site residue. Residues aspartate 17 and glycine 44 each coordinate Mg(2+). IMP contacts are provided by residues aspartate 17–lysine 20, asparagine 42–histidine 45, threonine 132, arginine 146, glutamine 226, threonine 241, and arginine 305. Histidine 45 acts as the Proton donor in catalysis. Leucine 301 to arginine 307 serves as a coordination point for substrate. GTP is bound by residues arginine 307, leucine 333–aspartate 335, and serine 415–glycine 417.

The protein belongs to the adenylosuccinate synthetase family. Homodimer. It depends on Mg(2+) as a cofactor.

Its subcellular location is the cytoplasm. It catalyses the reaction IMP + L-aspartate + GTP = N(6)-(1,2-dicarboxyethyl)-AMP + GDP + phosphate + 2 H(+). It functions in the pathway purine metabolism; AMP biosynthesis via de novo pathway; AMP from IMP: step 1/2. Plays an important role in the de novo pathway of purine nucleotide biosynthesis. Catalyzes the first committed step in the biosynthesis of AMP from IMP. This is Adenylosuccinate synthetase from Mycoplasma mycoides subsp. mycoides SC (strain CCUG 32753 / NCTC 10114 / PG1).